Consider the following 177-residue polypeptide: Nucleoside triphosphate/diphosphate phosphatase (177 aa).

Arginine 23 (proton donor) is an active-site residue. Residues asparagine 87, aspartate 103, aspartate 105, aspartate 107, aspartate 120, and glutamate 123 each contribute to the Mg(2+) site.

The protein belongs to the Ntdp family. Mg(2+) serves as cofactor.

It catalyses the reaction a ribonucleoside 5'-triphosphate + H2O = a ribonucleoside 5'-diphosphate + phosphate + H(+). The enzyme catalyses a ribonucleoside 5'-diphosphate + H2O = a ribonucleoside 5'-phosphate + phosphate + H(+). Has nucleoside phosphatase activity towards nucleoside triphosphates and nucleoside diphosphates. The protein is Nucleoside triphosphate/diphosphate phosphatase of Streptococcus sanguinis (strain SK36).